Consider the following 558-residue polypeptide: MAGPLPPLNQEPAFQKLQEYYDSKAKDLNIKDLFVKDSKRFSKYSLRLHTQNDGEILLDYSKNRINDEVWDLLLALAKVRRVNAARDAMFSGQHINITENRAVLHTALRNRGTDPVLVDDKDVMPDVRAELAHMKEFTNMVISGVWRGCTGKQITDVVNIGIGGSDLGPLMVTEALKPYGKGLHSHFVSNIDGTHLAEVLKKVNYETTLFIVASKTFTTQETITNATSAKTWLLEHSKEPESVAKHFVALSTNKEKVTEFGIDSTNMFGFWDWVGGRYSLWSAIGLSICLSIGFENFEQLLDGAHFMDNHFKTTPFEKNAPVILALLGVWYSNFFKAETHALLPYDQYLHRFAAYFQQGDMESNGKFVSKSGKPVKYSTGPIVWGEPGTNGQHAFYQLIHQGTRLIPCDFIAPAQTHNPIAGGKHHKILLSNFLAQTEALMAGKTVDEARTELSKAGLCGNELDNLLPHKVFVGNRPTNSIVVKKVSPFTLGALIALYEHKIFVQGIIWDINSFDQWGVELGKQLAKAIEPELDHCNEVSTHDSSTNGLINFIKANWK.

Glutamate 362 (proton donor) is an active-site residue. Residues histidine 393 and lysine 523 contribute to the active site.

This sequence belongs to the GPI family.

The protein resides in the cytoplasm. The enzyme catalyses alpha-D-glucose 6-phosphate = beta-D-fructose 6-phosphate. It functions in the pathway carbohydrate degradation; glycolysis; D-glyceraldehyde 3-phosphate and glycerone phosphate from D-glucose: step 2/4. The protein is Glucose-6-phosphate isomerase (Pgi) of Drosophila simulans (Fruit fly).